The sequence spans 429 residues: 3-phosphoshikimate 1-carboxyvinyltransferase (429 aa).

Residues Lys23, Ser24, and Arg28 each coordinate 3-phosphoshikimate. A phosphoenolpyruvate-binding site is contributed by Lys23. Phosphoenolpyruvate is bound by residues Gly95 and Arg123. Residues Ser168, Gln170, Asp316, and Lys343 each contribute to the 3-phosphoshikimate site. Gln170 contacts phosphoenolpyruvate. The active-site Proton acceptor is the Asp316. Residues Arg347 and Arg389 each contribute to the phosphoenolpyruvate site.

It belongs to the EPSP synthase family. In terms of assembly, monomer.

Its subcellular location is the cytoplasm. It catalyses the reaction 3-phosphoshikimate + phosphoenolpyruvate = 5-O-(1-carboxyvinyl)-3-phosphoshikimate + phosphate. It functions in the pathway metabolic intermediate biosynthesis; chorismate biosynthesis; chorismate from D-erythrose 4-phosphate and phosphoenolpyruvate: step 6/7. Catalyzes the transfer of the enolpyruvyl moiety of phosphoenolpyruvate (PEP) to the 5-hydroxyl of shikimate-3-phosphate (S3P) to produce enolpyruvyl shikimate-3-phosphate and inorganic phosphate. This chain is 3-phosphoshikimate 1-carboxyvinyltransferase, found in Bacillus thuringiensis subsp. konkukian (strain 97-27).